The primary structure comprises 234 residues: Small ribosomal subunit protein uS3 (234 aa).

A KH type-2 domain is found at 39–107; it reads IRKFLKKELY…EVSINIKEVK (69 aa).

It belongs to the universal ribosomal protein uS3 family. Part of the 30S ribosomal subunit. Forms a tight complex with proteins S10 and S14.

Its function is as follows. Binds the lower part of the 30S subunit head. Binds mRNA in the 70S ribosome, positioning it for translation. In Helicobacter acinonychis (strain Sheeba), this protein is Small ribosomal subunit protein uS3.